The chain runs to 334 residues: Glycerol-1-phosphate dehydrogenase [NAD(P)+] (334 aa).

NAD(+) contacts are provided by residues G77 to D81 and T99 to S102. Residue D104 participates in substrate binding. Position 108 (S108) interacts with NAD(+). Position 147 (D147) interacts with substrate. 2 residues coordinate Zn(2+): D147 and H225. H229 provides a ligand contact to substrate. H246 serves as a coordination point for Zn(2+).

Belongs to the glycerol-1-phosphate dehydrogenase family. Zn(2+) is required as a cofactor.

Its subcellular location is the cytoplasm. The catalysed reaction is sn-glycerol 1-phosphate + NAD(+) = dihydroxyacetone phosphate + NADH + H(+). The enzyme catalyses sn-glycerol 1-phosphate + NADP(+) = dihydroxyacetone phosphate + NADPH + H(+). The protein operates within membrane lipid metabolism; glycerophospholipid metabolism. Its function is as follows. Catalyzes the NAD(P)H-dependent reduction of dihydroxyacetonephosphate (DHAP or glycerone phosphate) to glycerol 1-phosphate (G1P). The G1P thus generated is used as the glycerophosphate backbone of phospholipids in the cellular membranes of Archaea. This chain is Glycerol-1-phosphate dehydrogenase [NAD(P)+], found in Methanococcus maripaludis (strain DSM 14266 / JCM 13030 / NBRC 101832 / S2 / LL).